The primary structure comprises 453 residues: Tubulin delta chain (453 aa).

A143–G149 contributes to the GTP binding site.

The protein belongs to the tubulin family. As to quaternary structure, found in a complex with TEDC1, TEDC2, TUBE1 and TUBD1.

The protein resides in the nucleus. It is found in the cytoplasm. Its subcellular location is the cytoskeleton. It localises to the microtubule organizing center. The protein localises to the centrosome. The protein resides in the centriole. It is found in the cell projection. Its subcellular location is the cilium. Functionally, acts as a positive regulator of hedgehog signaling and regulates ciliary function. This Macaca fascicularis (Crab-eating macaque) protein is Tubulin delta chain (TUBD1).